The sequence spans 364 residues: MMPFMDLILSILVSSVLLLNCKSSFHESPRRDAGSEVTSFFYVGGKYENFTIYVEEYVPQNPTQPYPIIFIAGAGQTGTNWLTTPDGRPGWASFFLDHGYTVYLTDQTSRGRSPWYPGIGFMVASGTSDIETLFTSTSHNLWPQAHLHTQWPGTGKVGDPTFDAFYAAQVQLQADQPISEESNTKAHSALLDRIGPAYVLTHSQAGSYGWRIGDARPNLVKGIVALEPAGPPFDQKYPYTGRARPWGITIGEIEYEPSAGPNATDLDTVIIPAKDQDHTECVLQSEPPKLLKNLQAIPALVVGAEASFHAPYEYCTAEYLKQAGVDVEFADLGEQGIKGNGHMMFMEKNNLEIAEVVLTWIQKQ.

Residues 1–18 form the signal peptide; it reads MMPFMDLILSILVSSVLL. N49 carries an N-linked (GlcNAc...) asparagine glycan. The Nucleophile role is filled by S203. The N-linked (GlcNAc...) asparagine glycan is linked to N262.

It belongs to the AB hydrolase superfamily.

The protein localises to the secreted. The catalysed reaction is a carboxylic ester + H2O = an alcohol + a carboxylate + H(+). Functionally, part of the gene cluster that mediates the biosynthesis of the antihypercholesterolemic agents phomoidrides which are dimeric anhydrides. The function of phiG within the pathway has still to be determined. The pathway begins with the highly reducing polyketide synthase phiA that catalyzes the formation of a C12-fatty acyl-ACP, starting from one acetate and 5 malonate units. The hydrolase phiM is involved in the release of the C12-fatty acyl chain from phiA. The alkylcitrate synthase (ACS) phiJ and the alkylcitrate dehydratase (ACDH) phiI then give rise to decarboxylated monomeric anhydrides by coupling the C12-fatty acyl chain with oxalacetic acid. The cyclase phiC is responsible for the dimerization of the monomeric anhydrides which leads to the production of prephomoidride that contains the characteristic bicyclo[4.3.1]deca-1,6-diene system of phomoidrides. Iterative oxidation catalyzed by the alpha-ketoglutarate-dependent dioxygenase phiK produced then phomoidride A. Finally, the methyltransferase phiE converts phomoidride A to phomoidride B via an acetalization reaction. The phosphatidylethanolamine-binding protein phiB and phiN are not essential for dimerization and their functions have still to be determined. This chain is Probable secreted lipase phiG, found in Fungal sp. (strain ATCC 74256).